The chain runs to 314 residues: Formylglycine-generating enzyme (314 aa).

Over residues 1–20 the composition is skewed to low complexity; it reads MAVAAPSPAAAAEPGPAARP. A disordered region spans residues 1–31; it reads MAVAAPSPAAAAEPGPAARPRSTRGQVRLPG. Ca(2+) contacts are provided by Asn-194, Ile-195, Asp-208, and His-210. 2 residues coordinate Cu(2+): Cys-272 and Cys-277.

Belongs to the sulfatase-modifying factor family. It depends on Cu(2+) as a cofactor.

It carries out the reaction L-cysteinyl-[sulfatase] + 2 a thiol + O2 = an organic disulfide + 3-oxo-L-alanyl-[sulfatase] + hydrogen sulfide + H2O + H(+). It participates in protein modification; sulfatase oxidation. Oxidase that catalyzes the conversion of cysteine to 3-oxoalanine on target proteins. 3-oxoalanine modification, which is also named formylglycine (fGly), occurs in the maturation of arylsulfatases and some alkaline phosphatases that use the hydrated form of 3-oxoalanine as a catalytic nucleophile. The sequence is that of Formylglycine-generating enzyme from Streptomyces coelicolor (strain ATCC BAA-471 / A3(2) / M145).